The primary structure comprises 218 residues: Thiopurine S-methyltransferase (218 aa).

Residues W10, L45, E66, and R123 each coordinate S-adenosyl-L-methionine.

It belongs to the class I-like SAM-binding methyltransferase superfamily. TPMT family.

Its subcellular location is the cytoplasm. It catalyses the reaction S-adenosyl-L-methionine + a thiopurine = S-adenosyl-L-homocysteine + a thiopurine S-methylether.. The polypeptide is Thiopurine S-methyltransferase (Pseudomonas aeruginosa (strain ATCC 15692 / DSM 22644 / CIP 104116 / JCM 14847 / LMG 12228 / 1C / PRS 101 / PAO1)).